We begin with the raw amino-acid sequence, 492 residues long: Fibroblast growth factor receptor substrate 3 (492 aa).

The N-myristoyl glycine moiety is linked to residue Gly-2. One can recognise an IRS-type PTB domain in the interval 13–115 (VPDNHPTKFK…QCNSINVMEE (103 aa)). Disordered regions lie at residues 153-173 (GEGP…RHPS), 338-455 (QLGG…SDSY), and 467-492 (SNLQ…DLPL).

In terms of assembly, binds NTRK1. Binds FGFR1, NGFR, GRB2, PTPN11 and ERK2. Phosphorylated by ULK2 in vitro. Phosphorylated on tyrosine residues upon stimulation by BFGF or NGFB.

It is found in the membrane. Adapter protein that links FGF and NGF receptors to downstream signaling pathways. Involved in the activation of MAP kinases. Down-regulates ERK2 signaling by interfering with the phosphorylation and nuclear translocation of ERK2. This is Fibroblast growth factor receptor substrate 3 (FRS3) from Homo sapiens (Human).